A 642-amino-acid chain; its full sequence is Chaperone protein DnaK (642 aa).

Thr-199 carries the post-translational modification Phosphothreonine; by autocatalysis. Residues Glu-570–Asp-585 are compositionally biased toward basic and acidic residues. The disordered stretch occupies residues Glu-570–Lys-642. Low complexity predominate over residues Glu-600–Gln-620. A compositionally biased stretch (acidic residues) spans Asp-627–Lys-642.

The protein belongs to the heat shock protein 70 family.

In terms of biological role, acts as a chaperone. This Idiomarina loihiensis (strain ATCC BAA-735 / DSM 15497 / L2-TR) protein is Chaperone protein DnaK.